The chain runs to 496 residues: Alanine aminotransferase 1 (496 aa).

A2 bears the N-acetylalanine mark. Phosphothreonine is present on T22. At K314 the chain carries N6-(pyridoxal phosphate)lysine.

This sequence belongs to the class-I pyridoxal-phosphate-dependent aminotransferase family. Alanine aminotransferase subfamily. Homodimer. Pyridoxal 5'-phosphate serves as cofactor. In terms of tissue distribution, liver, heart, skeletal muscle, etc.

The protein localises to the cytoplasm. It carries out the reaction L-alanine + 2-oxoglutarate = pyruvate + L-glutamate. The protein operates within amino-acid degradation; L-alanine degradation via transaminase pathway; pyruvate from L-alanine: step 1/1. Catalyzes the reversible transamination between alanine and 2-oxoglutarate to form pyruvate and glutamate. Participates in cellular nitrogen metabolism and also in liver gluconeogenesis starting with precursors transported from skeletal muscles. The sequence is that of Alanine aminotransferase 1 (Gpt) from Rattus norvegicus (Rat).